A 559-amino-acid chain; its full sequence is 2-succinyl-5-enolpyruvyl-6-hydroxy-3-cyclohexene-1-carboxylate synthase (559 aa).

It belongs to the TPP enzyme family. MenD subfamily. As to quaternary structure, homodimer. The cofactor is Mg(2+). Mn(2+) serves as cofactor. Thiamine diphosphate is required as a cofactor.

It catalyses the reaction isochorismate + 2-oxoglutarate + H(+) = 5-enolpyruvoyl-6-hydroxy-2-succinyl-cyclohex-3-ene-1-carboxylate + CO2. The protein operates within quinol/quinone metabolism; 1,4-dihydroxy-2-naphthoate biosynthesis; 1,4-dihydroxy-2-naphthoate from chorismate: step 2/7. Its pathway is quinol/quinone metabolism; menaquinone biosynthesis. In terms of biological role, catalyzes the thiamine diphosphate-dependent decarboxylation of 2-oxoglutarate and the subsequent addition of the resulting succinic semialdehyde-thiamine pyrophosphate anion to isochorismate to yield 2-succinyl-5-enolpyruvyl-6-hydroxy-3-cyclohexene-1-carboxylate (SEPHCHC). The protein is 2-succinyl-5-enolpyruvyl-6-hydroxy-3-cyclohexene-1-carboxylate synthase of Cytophaga hutchinsonii (strain ATCC 33406 / DSM 1761 / CIP 103989 / NBRC 15051 / NCIMB 9469 / D465).